Reading from the N-terminus, the 300-residue chain is Matrix protein (300 aa).

Positions M1–K36 are disordered.

Homodimer. Dimerization is critical for virion formation. Interacts with host ANP32B.

The protein resides in the virion. The protein localises to the host cell membrane. Its function is as follows. The M protein has a crucial role in virus assembly and interacts with the RNP complex as well as with the viral membrane. Associates with phosphatidylserine (PS) and phosphatidylinositol 4,5-bisphosphate (PIP2) at the plasma membrane. Interaction with PIP2 triggers matrix protein lattice polymerization. Matrix proteins induce host membrane deformation and curvature necessary for virion assembly/budding. The protein is Matrix protein (M) of Measles virus (strain Yamagata-1) (MeV).